The chain runs to 685 residues: Delta-like protein 4 (685 aa).

The signal sequence occupies residues 1 to 26 (MAAASRSASGWALLLLVALWQQRAAG). Over 27–529 (SGVFQLQLQE…PVGLPPSFPW (503 aa)) the chain is Extracellular. Disulfide bonds link C50–C54 and C61–C74. 2 N-linked (GlcNAc...) asparagine glycosylation sites follow: N108 and N183. One can recognise a DSL domain in the interval 173 to 217 (VICSDNYYGDNCSRLCKKRNDHFGHYVCQPDGNLSCLPGWTGEYC). A disulfide bridge connects residues C175 and C184. Interaction with Notch1 stretches follow at residues 185–187 (SRL) and 191–195 (RNDHF). A disulfide bridge connects residues C188 and C200. An N-linked (GlcNAc...) asparagine glycan is attached at N205. Disulfide bonds link C208–C217, C222–C233, C226–C239, C241–C250, C253–C264, C259–C270, C272–C281, C288–C300, C294–C310, C312–C321, C328–C339, C333–C348, C350–C359, C366–C377, C371–C388, C390–C399, C406–C417, C411–C426, C428–C437, C444–C455, C449–C464, C466–C475, C484–C495, C489–C506, and C508–C517. EGF-like domains follow at residues 218-251 (QQPICLSGCHEQNGYCSKPAECLCRPGWQGRLCN), 252-282 (ECIPHNGCRHGTCSTPWQCTCDEGWGGLFCD), 284-322 (DLNYCTHHSPCKNGATCSNSGQRSYTCTCRPGYTGVDCE), 324-360 (ELSECDSNPCRNGGSCKDQEDGYHCLCPPGYYGLHCE), 362-400 (STLSCADSPCFNGGSCRERNQGANYACECPPNFTGSNCE), 402-438 (KVDRCTSNPCANGGQCLNRGPSRMCRCRPGFTGTYCE), 440-476 (HVSDCARNPCAHGGTCHDLENGLMCTCPAGFSGRRCE), and 480-518 (SIDACASSPCFNRATCYTDLSTDTFVCNCPYGFVGSRCE). N393 is a glycosylation site (N-linked (GlcNAc...) asparagine). The helical transmembrane segment at 530–550 (VAVSLGVGLAVLLVLLGMVAV) threads the bilayer. Topologically, residues 551–685 (AVRQLRLRRP…RNECVIATEV (135 aa)) are cytoplasmic.

As to quaternary structure, interacts with NOTCH4. Interacts (via N-terminal DSL and MNNL domains) with NOTCH1 (via EGF-like domains). Expressed in vascular endothelium.

It is found in the cell membrane. Its function is as follows. Involved in the Notch signaling pathway as Notch ligand. Activates NOTCH1 and NOTCH4. Involved in angiogenesis; negatively regulates endothelial cell proliferation and migration and angiogenic sprouting. Essential for retinal progenitor proliferation. Required for suppressing rod fates in late retinal progenitors as well as for proper generation of other retinal cell types. During spinal cord neurogenesis, inhibits V2a interneuron fate. The chain is Delta-like protein 4 (DLL4) from Homo sapiens (Human).